The chain runs to 400 residues: Enoyl-[acyl-carrier-protein] reductase [NADH] (400 aa).

NAD(+) contacts are provided by residues glycine 48–tyrosine 53, phenylalanine 74–glutamate 75, aspartate 111–alanine 112, and leucine 139–alanine 140. Tyrosine 225 lines the substrate pocket. Residue tyrosine 235 is the Proton donor of the active site. Residues lysine 244 and valine 273–threonine 275 contribute to the NAD(+) site.

The protein belongs to the TER reductase family. As to quaternary structure, monomer.

It catalyses the reaction a 2,3-saturated acyl-[ACP] + NAD(+) = a (2E)-enoyl-[ACP] + NADH + H(+). It participates in lipid metabolism; fatty acid biosynthesis. Functionally, involved in the final reduction of the elongation cycle of fatty acid synthesis (FAS II). Catalyzes the reduction of a carbon-carbon double bond in an enoyl moiety that is covalently linked to an acyl carrier protein (ACP). This is Enoyl-[acyl-carrier-protein] reductase [NADH] from Aliivibrio fischeri (strain ATCC 700601 / ES114) (Vibrio fischeri).